A 4011-amino-acid polypeptide reads, in one-letter code: MVQTPRQKKFGNEPIAIIGSACRFPGAASTPSKLWELLRKPKDLLTKIPPNRFNADSFYHPDGAHHGASNVTESYFLEEDPRLFDAAFFNVKPVEAHSIDPQHRMLLEVVYESLEAAGQSIEGLAKSQTGVFVGLMCADFSDHILRDLDAIPTYMATGTARSLISNRISYFFDWHGPSMTIDTACSSSLFAVHQAVQLLRSGDSDLAVAAGSNLILGPELYIGESKLKMLSPTGRSRMWDADADGYARGEGVAAVILKRLSDAIRDGDHIESIIRESGINSDGRTKGLTMPNELAQADLIVRTYQKAGLDPTKEEERCQYFEAHGTGTEAGDCREAEGISRAFFGYQGGNEGPAPPSQSEKLYVGSIKTVVGHTEGTAGLAGLLKASLAIQHSTIPPNMLFERLSPKVAPFYKGVEIATEAKPWPKASDVRRASVNSFGFGGANAHVILENYEPPAVAAAGTGAGAGDAASQTSFTPFVFSAASETALEGVLEAYAAHLRENPDLPLRDLSYTLHSRRSALGVRAALPAVASTQQLANSISDHLELARAGRNDKSAGQGASIGSRPIAATPRLLGVFTGQGAQWAAMGKELIQGSAFVRDRIKSLESALSDLPASARASWSLTDELLADAASSRLGEALLAQPLCTAVQIVLVDLLREAGIEFAAVVGHSSGEIAAAYAARIISAEEAIKIAYYRGLCVEEHVKTEGAMMAVGTSYEDATELCNLDAFSGRLGIAACNSPSSVTLSGDAAAIREAKDILDDEKKFARPLKVNKAYHSHHMAACSAPYKQALEACNIEPRQLAEEEGGCVWYSSVYPGTAMGTTAAHIEDLKGEYWKDNMLRPVLFAQALETAIERNEDSPFNLVIEVGPHPALKGPASETLTALYGKKQLPLPPYTGTLSRGSGDIAALSVTLGTAWSRFGSPFVNFAQYEALLTGEPRSARKVVPNLPTYKWDHDKVFWHDTRLSRAMRNRKELPNPLLGRRIPDGVTDEMRWRNIIRPSELPWISGHQLQGQMVYPAAAYLSTAIEACAFLAEGSVVESVEIRDFDLGKALVFDGNTEQTGVETLFSLSNIVKKGPKQITANFAFHAALGADADVLSRLGSGRVIVTLAGTGTGAGTGRLLLPPQRAPEPADTAEVREDEFYASLEKLGYEYTNDFRALSGMRRKLDHGSAYVRVPGHELAADAVLVHPALLDCALQAIFLAYWYPNDGSLDQLQVPTGIASLTVNTSLCRQDLAEGVRLPLESFLTEDPLSTATIGGDVEVYGRDGRTPLIQVQGVRITPLATRTGQADRQLFMENVWGPGAPDGTLAADNRAGAADFELASDLERLTIYFMRKLVRDIPPSQRQGLEWHHEALFDFVEHVLEQTANGRQRFCKPEWLDDTWESISHIRAKHPDSIEVELTHAVGENLAAAVRGETQILQHMFKDNLLNRYYVEALGIRETTAFLARTVAQIVHRYPHMDILEIGAGTGGATKAIFREIGRTFSSYTYTDISTGFFEKAQEVFAATADKMIFRALDIEKDVVEQGYREGAYDLIIGSLVLHATKSLDKTMRATRRLLKPGGYLVLLELTNLDVLRTGFAMSGLPGWWLGRDDGRRYSPCATSARWHQVLLGAGFSGIDTITPEVDVLPRPFSVIVSQAVEPRVNLLREPLSHPAESNASAADGGELVIVGGQSLATVILIDSVLDLTRHFGFAVTRLSSLDEFDAAAVSPTALVLNLAELDQPVFSNLTGETMRGLQSMLDYQRTILWVTQGCRAEQPYMSMSVGLGRTVALEAPGVKLQFLDLDISRKPNSKLVAEALIRLRFTRDEGSTRGILYSTEQELVEDDGRILVPRLLPIRPANERYNSSKRKITKLTEVGAESPALVLASTDAGYAVYEGASDDARAGASDDTAIIRVTASTLLPVIGNLYGVLGQEKDSGSWVLGLSSTNGSHVAVPRGQVRLVGDAILKEEAQQQQRLLLLALLAVEAQSSQILSAVPRDSKLLVNEPPAGLAGSLVRRAAERGTTVVFTASTTDAADLGLPHGHPVVSLSPLSSKRAVRAALPADVALFLDCSAEPEGVGLGSLIAACVPPSGQSIKLAELGEKLRQQPTLVDAPPSDTELASLPTLVDWSSGDKVPVSLQSVDSLIRFDGAKTYVLFGLTSDLGRSLVDWMASHGARNVVMTSRRPNIDPKWLEERRARGIRIQAFANDITDPAAVEDLVNSIRRSFPPIAGIMHGAMVLEDVPFSEMSLEIMNKVVRPKVMGTIHLDRLFQDEQLDFFVFFSSLASASGNRGQSNYSAANMYMTAKTFERRRKGLAASVLHLGAVMGIGYVMREASEIVFPAIRRAGFQWMDERAFRQCVAEAILAGRPDSGRSPEIVTGLRVINVDEEEPAPWMDNPRFQHCIVRGGTDSGAKKNQGGAAAGVKTRLLEAATPEEVLDIIRDSFLQKLQIMLQTELQTDDERANILAANAEDTGIDSLVAVEIRSWFQKEMDVDVPVLKILGGATMADLVAFAHEKLPEGLTPNLGNESAAAAAAAAAERSQSRVEITPAPDAVDTSRTSTTVFSAPPTLDPASSSTGSDHPTSVTSSGHTTPAHELETGLSPPSAPPCAPREQDVERTAPMSLGQSRFWFLRSYIEDQTTFNISFSVRLKGPLQVDKLESAIQTLGHRHQALRTAFVARPGQLLPDQAVLKRSLLRLEKRQIKEAAEASEAFEAMKNYVFAIERGESMRLVLLSLSPSDHFLVVGYHHINMDGASLEVFMADLMKLYTGRPLAPRPFQYPDFAAQQQLEVQQGKMDRDIAWWQDQLAGAALFRLLGTGDLCIGMADANRFEGDLASSVGMYLNLLPLRFRPSGDRTFRDTLKDVRRTAYAAMAHSHVPFDLVLNNLKIQRSTLHSPLFQAFINYRAGVAEKRSLGAVEGEGEQYHFGRSAYDISLDIMENPNSDPRLMFLVQEQLYSEHEANILADTYMHLLDLFARKPDSTLGSAPAFAPETAEEAIRLGRGNPVVSDWPQTIVHRVDDIIQRNPDTIAVREALGGRVWNYRQLRDRVGAIARALLAAGVTGGSRVALFQEPGFDWVSSLLAVMRVGAVFVPIDPGTPVERLAVIAAAARPAVALSHDATESAQEAALAVIRDAGGARVVNVSRGEGEGEGDVAGAGAPANLAQPDEAAVIFFTSGTTGVPKGAIVPHRGITNFMEHTCDIRGPEVVLFHSALGFDLAMWQCFSGLAHGGTLVVAPRSMRGDPVAITGLMAKEKITCTGATPSEYHTWIQYGFSKLAQSTSWRIAMTGGEQCTPKLVDDFRSLRLPGLRLWNCYGPSEVTVGSNQAEIPLSEPPQAPVTVGKAMPNRSVYILDDRLEPVCAGAPGEVVIGGVGVGLGYLGNDHLTAEKFVPDPFAPAGGSAKMYRTGDRGRLTRDGELEILGRIDGDSQIKLRGIRIEMQDVEQAILRSADGALASVCVTARGEPPTLVAHAVFRPDAPVPRRDRDAFLRRLASSLPLPQYMHPAVIVEIPSMPLNLHGKLDRRAVQELPTRVVAAKEEEEEKRPNGSSAAPLTQQELQLRSRVWERVIPEDVLSLYTVDRDTDFFHVGGNSMLLVEVQRRVKDEFGANLTIMRLFENSTLGAMAAAVHDAALESAGVDAAIDWEDETALTKDLADAVPSPEERAAAGRRRLDNNGPGGKVVVILTGATGFIGRELLARLLSSPDVAEVRCIAVRDPSRLADVVESNPGRVSVHAGDLTSVEETVGEEDEQRLFADAHAVIHCGADVSFLKTYATLRRANVGSTKALARLALRHGLDFHYVSTAATGRLLLVADPSSSPTARGDVFGEESVAAYPPPPGWLDHYVASKWASEAFLERAAARLGLRVWVHRPTSVTGPGAGETDVMSTVMRFAKKLRAVPVSSRWRGSLDFVPVETVADGIVGAVIRGGREHQQQQQQQETTPEEAGSVVPVKFLHHSGGLVIPIERLQSHLEEEDGVEYRTVPLGQWIEMAVAEGLNVLVAAYLASVDEMDTDIVFQAYVKG.

Residues 12 to 451 (NEPIAIIGSA…GANAHVILEN (440 aa)) form the Ketosynthase family 3 (KS3) domain. Residues Cys-185, His-324, and His-373 each act as for beta-ketoacyl synthase activity in the active site. Positions 576–903 (VFTGQGAQWA…PYTGTLSRGS (328 aa)) are acyl transferase (AT) domain. Residues 977-1113 (NPLLGRRIPD…GRVIVTLAGT (137 aa)) form an N-terminal hotdog fold region. The region spanning 977 to 1290 (NPLLGRRIPD…ITPLATRTGQ (314 aa)) is the PKS/mFAS DH domain. The tract at residues 978–1287 (PLLGRRIPDG…GVRITPLATR (310 aa)) is dehydratase (DH) domain. Residue His-1009 is the Proton acceptor; for dehydratase activity of the active site. Positions 1135–1290 (TAEVREDEFY…ITPLATRTGQ (156 aa)) are C-terminal hotdog fold. The active-site Proton donor; for dehydratase activity is Asp-1195. Residues 1434-1626 (YYVEALGIRE…FSGIDTITPE (193 aa)) are methyltransferase (MT) domain. Positions 2138–2311 (TYVLFGLTSD…AASVLHLGAV (174 aa)) are ketoreductase (KR)domain. Positions 2429–2504 (DSFLQKLQIM…DLVAFAHEKL (76 aa)) constitute a Carrier 1 domain. The residue at position 2464 (Ser-2464) is an O-(pantetheine 4'-phosphoryl)serine. The interval 2519–2607 (AAAAAAAERS…PREQDVERTA (89 aa)) is disordered. Over residues 2559–2578 (PASSSTGSDHPTSVTSSGHT) the composition is skewed to polar residues. Residues 2604–2975 (ERTAPMSLGQ…KPDSTLGSAP (372 aa)) form a condensation region. The tract at residues 3009 to 3414 (IIQRNPDTIA…GELEILGRID (406 aa)) is adenylation. The segment at 3525–3544 (AKEEEEEKRPNGSSAAPLTQ) is disordered. The segment covering 3535–3544 (NGSSAAPLTQ) has biased composition (polar residues). The Carrier 2 domain maps to 3541-3621 (PLTQQELQLR…AMAAAVHDAA (81 aa)). The residue at position 3581 (Ser-3581) is an O-(pantetheine 4'-phosphoryl)serine. Residues 3671–3978 (VVILTGATGF…RTVPLGQWIE (308 aa)) are reductase-like.

The protein in the C-terminal section; belongs to the NRP synthetase family.

The catalysed reaction is L-leucine + 8 malonyl-CoA + 4 S-adenosyl-L-methionine + ATP + 9 NADPH + 12 H(+) = (5S)-5-(2-methylpropyl)-3-[(2E,6R,8E,10E,12E)-6,8,10,12-tetramethyltetradeca-2,8,10,12-tetraenoyl]-2,5-dihydro-1H-pyrrol-2-one + AMP + 4 S-adenosyl-L-homocysteine + 8 CO2 + diphosphate + 9 NADP(+) + 8 CoA + 7 H2O. It participates in mycotoxin biosynthesis. In terms of biological role, hybrid PKS-NRPS synthetase; part of the gene cluster that mediates the biosynthesis of myceliothermophins, mycotoxins that contain a trans-fused decalin ring system connected to a conjugated 3-pyrrolin-2-one moiety and that have potential anti-tumor properties. The polyketide synthase module (PKS) of the PKS-NRPS mycA is responsible for the synthesis of the octaketide backbone. The downstream nonribosomal peptide synthetase (NRPS) module then amidates the carboxyl end of the octaketide with a leucine. A reductase-like domain (R) at the C-terminus catalyzes the reductive release of the polyketide-amino acid intermediate. Because mycA lacks a designated enoylreductase (ER) domain, the required activity is provided the enoyl reductase mycC. Following mycA-catalyzed construction and release of aminoacyl polyketide aldehyde, Knoevenagel condensation yields the expected ketone. This C18 keto acyclic precursor is the substrate of the Diels-Alderase mycB, that catalyzes the Diels-Alder cycloaddition to produce myceliothermophin E. A yet unknown oxygenase involved in the production of myceliothermophin A, via substitution with a hydroxyl group at the C21, has still to be identified. This Thermothelomyces thermophilus (strain ATCC 42464 / BCRC 31852 / DSM 1799) (Sporotrichum thermophile) protein is Hybrid PKS-NRPS synthetase mycA.